Here is a 311-residue protein sequence, read N- to C-terminus: D-alanine--D-alanine ligase (311 aa).

The ATP-grasp domain occupies 105–306 (KQLYIHAGLP…FSALLDRLIE (202 aa)). 133 to 188 (ADRLGLPVVVKPEHEGSSIGLSIVRNRDQLAAAVETGWQYDRRCLIEKYVHGIEIT) serves as a coordination point for ATP. Positions 261, 273, and 275 each coordinate Mg(2+).

It belongs to the D-alanine--D-alanine ligase family. Mg(2+) is required as a cofactor. Requires Mn(2+) as cofactor.

The protein resides in the cytoplasm. It catalyses the reaction 2 D-alanine + ATP = D-alanyl-D-alanine + ADP + phosphate + H(+). The protein operates within cell wall biogenesis; peptidoglycan biosynthesis. Its function is as follows. Cell wall formation. This chain is D-alanine--D-alanine ligase, found in Syntrophobacter fumaroxidans (strain DSM 10017 / MPOB).